The primary structure comprises 113 residues: Large ribosomal subunit protein uL22 (113 aa).

This sequence belongs to the universal ribosomal protein uL22 family. As to quaternary structure, part of the 50S ribosomal subunit.

Functionally, this protein binds specifically to 23S rRNA; its binding is stimulated by other ribosomal proteins, e.g. L4, L17, and L20. It is important during the early stages of 50S assembly. It makes multiple contacts with different domains of the 23S rRNA in the assembled 50S subunit and ribosome. The globular domain of the protein is located near the polypeptide exit tunnel on the outside of the subunit, while an extended beta-hairpin is found that lines the wall of the exit tunnel in the center of the 70S ribosome. In Magnetococcus marinus (strain ATCC BAA-1437 / JCM 17883 / MC-1), this protein is Large ribosomal subunit protein uL22.